The sequence spans 182 residues: Ribosome maturation factor RimM (182 aa).

Residues 103–182 (EDEFYWRELF…RIEVDWDPAF (80 aa)) enclose the PRC barrel domain.

This sequence belongs to the RimM family. As to quaternary structure, binds ribosomal protein uS19.

The protein resides in the cytoplasm. Functionally, an accessory protein needed during the final step in the assembly of 30S ribosomal subunit, possibly for assembly of the head region. Essential for efficient processing of 16S rRNA. May be needed both before and after RbfA during the maturation of 16S rRNA. It has affinity for free ribosomal 30S subunits but not for 70S ribosomes. The protein is Ribosome maturation factor RimM of Vibrio cholerae serotype O1 (strain ATCC 39315 / El Tor Inaba N16961).